The primary structure comprises 130 residues: Small ribosomal subunit protein uS8 (130 aa).

Belongs to the universal ribosomal protein uS8 family. In terms of assembly, part of the 30S ribosomal subunit. Contacts proteins S5 and S12.

Its function is as follows. One of the primary rRNA binding proteins, it binds directly to 16S rRNA central domain where it helps coordinate assembly of the platform of the 30S subunit. This chain is Small ribosomal subunit protein uS8, found in Photobacterium profundum (strain SS9).